Consider the following 618-residue polypeptide: 1-deoxy-D-xylulose-5-phosphate synthase (618 aa).

Residues His76 and 117–119 (GHS) contribute to the thiamine diphosphate site. Asp148 contributes to the Mg(2+) binding site. Residues 149–150 (GA), Asn177, Tyr284, and Glu364 each bind thiamine diphosphate. Residue Asn177 participates in Mg(2+) binding.

Belongs to the transketolase family. DXPS subfamily. In terms of assembly, homodimer. The cofactor is Mg(2+). It depends on thiamine diphosphate as a cofactor.

It carries out the reaction D-glyceraldehyde 3-phosphate + pyruvate + H(+) = 1-deoxy-D-xylulose 5-phosphate + CO2. It participates in metabolic intermediate biosynthesis; 1-deoxy-D-xylulose 5-phosphate biosynthesis; 1-deoxy-D-xylulose 5-phosphate from D-glyceraldehyde 3-phosphate and pyruvate: step 1/1. Catalyzes the acyloin condensation reaction between C atoms 2 and 3 of pyruvate and glyceraldehyde 3-phosphate to yield 1-deoxy-D-xylulose-5-phosphate (DXP). This is 1-deoxy-D-xylulose-5-phosphate synthase from Francisella philomiragia subsp. philomiragia (strain ATCC 25017 / CCUG 19701 / FSC 153 / O#319-036).